Consider the following 154-residue polypeptide: 6,7-dimethyl-8-ribityllumazine synthase (154 aa).

5-amino-6-(D-ribitylamino)uracil-binding positions include Phe-23, 57 to 59 (AYE), and 81 to 83 (AVI). 86–87 (AT) is a binding site for (2S)-2-hydroxy-3-oxobutyl phosphate. His-89 (proton donor) is an active-site residue. Phe-114 contributes to the 5-amino-6-(D-ribitylamino)uracil binding site. Arg-128 serves as a coordination point for (2S)-2-hydroxy-3-oxobutyl phosphate.

It belongs to the DMRL synthase family.

The catalysed reaction is (2S)-2-hydroxy-3-oxobutyl phosphate + 5-amino-6-(D-ribitylamino)uracil = 6,7-dimethyl-8-(1-D-ribityl)lumazine + phosphate + 2 H2O + H(+). The protein operates within cofactor biosynthesis; riboflavin biosynthesis; riboflavin from 2-hydroxy-3-oxobutyl phosphate and 5-amino-6-(D-ribitylamino)uracil: step 1/2. Its function is as follows. Catalyzes the formation of 6,7-dimethyl-8-ribityllumazine by condensation of 5-amino-6-(D-ribitylamino)uracil with 3,4-dihydroxy-2-butanone 4-phosphate. This is the penultimate step in the biosynthesis of riboflavin. This Desulforamulus reducens (strain ATCC BAA-1160 / DSM 100696 / MI-1) (Desulfotomaculum reducens) protein is 6,7-dimethyl-8-ribityllumazine synthase.